The following is a 181-amino-acid chain: Cytidylate kinase (181 aa).

7-15 contributes to the ATP binding site; the sequence is GPPGSGTTS.

The protein belongs to the cytidylate kinase family. Type 2 subfamily.

The protein resides in the cytoplasm. The catalysed reaction is CMP + ATP = CDP + ADP. It catalyses the reaction dCMP + ATP = dCDP + ADP. This Methanoculleus marisnigri (strain ATCC 35101 / DSM 1498 / JR1) protein is Cytidylate kinase.